Consider the following 226-residue polypeptide: uncharacterized protein (226 aa).

A run of 4 helical transmembrane segments spans residues 25–45 (ALAW…IFLI), 54–74 (FLLF…YFIF), 107–127 (ELFL…YFFI), and 153–173 (TITI…CFSS).

The protein resides in the cell membrane. This is an uncharacterized protein from Mycoplasma genitalium (strain ATCC 33530 / DSM 19775 / NCTC 10195 / G37) (Mycoplasmoides genitalium).